The following is a 100-amino-acid chain: Small ribosomal subunit protein uS14c (100 aa).

Belongs to the universal ribosomal protein uS14 family. Part of the 30S ribosomal subunit.

Its subcellular location is the plastid. It localises to the chloroplast. Binds 16S rRNA, required for the assembly of 30S particles. The protein is Small ribosomal subunit protein uS14c of Bigelowiella natans (Pedinomonas minutissima).